A 186-amino-acid chain; its full sequence is Probable chorismate pyruvate-lyase (186 aa).

Positions 77, 115, and 174 each coordinate substrate.

The protein belongs to the UbiC family.

The protein resides in the cytoplasm. The catalysed reaction is chorismate = 4-hydroxybenzoate + pyruvate. It functions in the pathway cofactor biosynthesis; ubiquinone biosynthesis. Functionally, removes the pyruvyl group from chorismate, with concomitant aromatization of the ring, to provide 4-hydroxybenzoate (4HB) for the ubiquinone pathway. In Shewanella sp. (strain W3-18-1), this protein is Probable chorismate pyruvate-lyase.